Consider the following 160-residue polypeptide: Protein cornichon homolog 2 (160 aa).

Residues 1–10 lie on the Cytoplasmic side of the membrane; sequence MAFTFAAFCY. The helical transmembrane segment at 11–31 threads the bilayer; it reads MLTLVLCAALIFFVIWQIIAF. The Lumenal portion of the chain corresponds to 32 to 72; it reads DELRTDFKNPIDQSNPTRARERILNIERICNLLRRLVVPEY. A helical transmembrane segment spans residues 73-93; sequence SIHGLFCLMFMCAGEWVTLGL. Residues 94–138 are Cytoplasmic-facing; that stretch reads NIPLLLYHLWRFFHRPADGSEVMYDPVSVMNADILNYCQKESWCK. The helical transmembrane segment at 139-159 threads the bilayer; sequence LGFYLLSFFYYLYSMVYALVS. Position 160 (Phe160) is a topological domain, lumenal.

This sequence belongs to the cornichon family.

Its subcellular location is the membrane. Regulates the trafficking and gating properties of AMPA-selective glutamate receptors (AMPARs). The chain is Protein cornichon homolog 2 (cnih2) from Danio rerio (Zebrafish).